We begin with the raw amino-acid sequence, 242 residues long: Sensory transduction protein LytT (242 aa).

The Response regulatory domain occupies 2-116 (HVLIVDDEPL…KITQVIEKAS (115 aa)). The region spanning 137-241 (IPIQGEDRIY…VKEFKEKLGL (105 aa)) is the HTH LytTR-type domain.

Phosphorylated by LytS.

The protein resides in the cytoplasm. Its function is as follows. Member of the two-component regulatory system LytS/LytT that probably regulates genes involved in cell wall metabolism. This chain is Sensory transduction protein LytT (lytT), found in Enterococcus faecalis (strain ATCC 700802 / V583).